Consider the following 166-residue polypeptide: Probable histone deacetylase complex subunit SAP18 (166 aa).

Positions 143-166 (GRRFNNREQGDRFDHRQRQRSPIR) are disordered. A compositionally biased stretch (basic and acidic residues) spans 147-158 (NNREQGDRFDHR).

It belongs to the SAP18 family. In terms of assembly, interacts with SIN3 and histone deacetylase.

Functionally, acts in transcription repression. Involved in the tethering of the SIN3 complex to core histone proteins. The chain is Probable histone deacetylase complex subunit SAP18 from Caenorhabditis elegans.